The primary structure comprises 218 residues: Probable nicotinate-nucleotide adenylyltransferase (218 aa).

This sequence belongs to the NadD family.

It carries out the reaction nicotinate beta-D-ribonucleotide + ATP + H(+) = deamido-NAD(+) + diphosphate. It participates in cofactor biosynthesis; NAD(+) biosynthesis; deamido-NAD(+) from nicotinate D-ribonucleotide: step 1/1. Catalyzes the reversible adenylation of nicotinate mononucleotide (NaMN) to nicotinic acid adenine dinucleotide (NaAD). This Burkholderia lata (strain ATCC 17760 / DSM 23089 / LMG 22485 / NCIMB 9086 / R18194 / 383) protein is Probable nicotinate-nucleotide adenylyltransferase.